The sequence spans 200 residues: Protein C2-DOMAIN ABA-RELATED 5 (200 aa).

Residues 22 to 142 enclose the C2 domain; sequence VAGEKHKDRR…LKMHLHDLPS (121 aa). Ca(2+) is bound by residues Arg-57, Asp-58, Asp-63, Asp-109, Tyr-110, Asp-111, and Asp-117.

This sequence belongs to the plant CAR protein family. As to quaternary structure, binds to PYR/PYL/RCAR abscisic acid intracellular receptors in an ABA-independent manner, both at the plasma membrane and in the nucleus.

It is found in the cell membrane. The protein localises to the nucleus. In terms of biological role, stimulates the GTPase/ATPase activities of Obg-like ATPases. Mediates the transient calcium-dependent interaction of PYR/PYL/RCAR abscisic acid (ABA) receptors with the plasma membrane and thus regulates ABA sensitivity. In Arabidopsis thaliana (Mouse-ear cress), this protein is Protein C2-DOMAIN ABA-RELATED 5.